The chain runs to 581 residues: Arginine--tRNA ligase (581 aa).

The 'HIGH' region signature appears at Pro126–His136.

The protein belongs to the class-I aminoacyl-tRNA synthetase family. As to quaternary structure, monomer.

The protein resides in the cytoplasm. The enzyme catalyses tRNA(Arg) + L-arginine + ATP = L-arginyl-tRNA(Arg) + AMP + diphosphate. This chain is Arginine--tRNA ligase, found in Shewanella sediminis (strain HAW-EB3).